The chain runs to 647 residues: NADP-dependent malic enzyme, chloroplastic (647 aa).

The N-terminal 61 residues, 1 to 61, are a transit peptide targeting the chloroplast; that stretch reads MMSLNSSSVV…VDGAVKDVNA (61 aa). The Proton donor role is filled by Y195. An NAD(+)-binding site is contributed by R248. The Proton acceptor role is filled by K266. Positions 338, 339, and 362 each coordinate a divalent metal cation. D362 is an NAD(+) binding site. NADP(+) is bound at residue 391 to 407; it reads LFLGAGEAGTGIAELIA. Position 503 (N503) interacts with NAD(+).

The protein belongs to the malic enzymes family. In terms of assembly, homotetramer. It depends on Mg(2+) as a cofactor. Mn(2+) is required as a cofactor.

It localises to the plastid. It is found in the chloroplast. It carries out the reaction (S)-malate + NADP(+) = pyruvate + CO2 + NADPH. The catalysed reaction is oxaloacetate + H(+) = pyruvate + CO2. It functions in the pathway photosynthesis; C3 acid pathway. The chloroplastic ME isoform decarboxylates malate shuttled from neighboring mesophyll cells. The CO(2) released is then refixed by ribulose-bisphosphate carboxylase. This pathway eliminates the photorespiratory loss of CO(2) that occurs in most plants. This chain is NADP-dependent malic enzyme, chloroplastic (MODA), found in Flaveria pringlei.